The chain runs to 617 residues: Chaperone protein HscA homolog (617 aa).

This sequence belongs to the heat shock protein 70 family.

Chaperone involved in the maturation of iron-sulfur cluster-containing proteins. Has a low intrinsic ATPase activity which is markedly stimulated by HscB. The protein is Chaperone protein HscA homolog of Aliivibrio salmonicida (strain LFI1238) (Vibrio salmonicida (strain LFI1238)).